The sequence spans 106 residues: uncharacterized protein (106 aa).

2 helical membrane-spanning segments follow: residues 17–37 (AGLL…AVLV) and 55–75 (FSSS…FMIF).

It is found in the membrane. This is an uncharacterized protein from Saccharomyces cerevisiae (strain ATCC 204508 / S288c) (Baker's yeast).